A 313-amino-acid polypeptide reads, in one-letter code: MRTLYPEVTPFDHGMLCVDDSHRLYYEQCGNPHGKPVVILHGGPGGGCNDKMRRFHDPDKYRIVLFDQRGAGRSMPHANLTNNTTWDLVADIEKLRVALGITRWQVFGGSWGSTLALAYAQTHPEQTTELVLRGIFMLRRWELEWFYQEGASRLFPDAWDRYIAAIPPVERHDLISAFHRRLTSDDEATRLAAAQAWSLWEGATSCLYMDQDFIASHENPHFALAFARIENHYFVNGGFFEVEDQLLRDAQRIANIPGVIVHGRYDVVCPLQNAWDLHKAWPKASLKITPGAGHSAFEPQNIDALVCATDSFV.

In terms of domain architecture, AB hydrolase-1 spans 35 to 298 (KPVVILHGGP…TPGAGHSAFE (264 aa)). The active-site Nucleophile is the serine 110. Residue aspartate 266 is part of the active site. The Proton donor role is filled by histidine 294.

It belongs to the peptidase S33 family.

The protein resides in the cytoplasm. The enzyme catalyses Release of N-terminal proline from a peptide.. Specifically catalyzes the removal of N-terminal proline residues from peptides. The polypeptide is Proline iminopeptidase (pip) (Xylella fastidiosa (strain Temecula1 / ATCC 700964)).